A 566-amino-acid chain; its full sequence is Putative ankyrin repeat protein RF_0987 (566 aa).

Disordered stretches follow at residues 61 to 118 (KKKN…HENS), 276 to 314 (PPVM…SAEI), and 355 to 392 (VNNN…SEST). The span at 78 to 92 (NQEEPKLASQEHTEA) shows a compositional bias: basic and acidic residues. Residues 101-112 (TGNTALPSVTAS) show a composition bias toward polar residues. Residues 296–308 (TPVTTPSKVVPTT) are compositionally biased toward low complexity. Polar residues predominate over residues 365 to 378 (EKSPPVSSSNVTIQ). ANK repeat units follow at residues 506 to 535 (SGET…KIST) and 539 to 566 (ECQY…KGYQ).

In Rickettsia felis (strain ATCC VR-1525 / URRWXCal2) (Rickettsia azadi), this protein is Putative ankyrin repeat protein RF_0987.